A 193-amino-acid polypeptide reads, in one-letter code: Peptidyl-tRNA hydrolase (193 aa).

Tyrosine 18 is a tRNA binding site. Histidine 23 serves as the catalytic Proton acceptor. TRNA-binding residues include phenylalanine 69, asparagine 71, and asparagine 117.

It belongs to the PTH family. Monomer.

It localises to the cytoplasm. The enzyme catalyses an N-acyl-L-alpha-aminoacyl-tRNA + H2O = an N-acyl-L-amino acid + a tRNA + H(+). Its function is as follows. Hydrolyzes ribosome-free peptidyl-tRNAs (with 1 or more amino acids incorporated), which drop off the ribosome during protein synthesis, or as a result of ribosome stalling. Functionally, catalyzes the release of premature peptidyl moieties from peptidyl-tRNA molecules trapped in stalled 50S ribosomal subunits, and thus maintains levels of free tRNAs and 50S ribosomes. The chain is Peptidyl-tRNA hydrolase from Teredinibacter turnerae (strain ATCC 39867 / T7901).